The primary structure comprises 278 residues: MALKTFNPITPSQRQLVIVDRSALYKGKPVKALTEGLTKSGGRNNLGRITARFIGGGHKRTYRLIDFKRRKFDVEGTVERIEYDPNRTAFIALVNYADGEKAYILAPQRLAAGDKVIASEKAVDVKPGNTMPLQFIPVGSIIHNVEMKPGKGGQIARSAGGYAQLVGRDQGMAILRLNSGEQRLVHGSCLASIGAVSNPDHANINDGKAGRTVWRGKRPHNRGVVMNPVDHPHGGGEGRTSGGRHPVTPWGKPTKGKRTRSNKSTDKMIMRSRHQRKK.

Residues 202–278 (ANINDGKAGR…IMRSRHQRKK (77 aa)) form a disordered region.

It belongs to the universal ribosomal protein uL2 family. Part of the 50S ribosomal subunit. Forms a bridge to the 30S subunit in the 70S ribosome.

Its function is as follows. One of the primary rRNA binding proteins. Required for association of the 30S and 50S subunits to form the 70S ribosome, for tRNA binding and peptide bond formation. It has been suggested to have peptidyltransferase activity; this is somewhat controversial. Makes several contacts with the 16S rRNA in the 70S ribosome. This is Large ribosomal subunit protein uL2 from Rhizobium johnstonii (strain DSM 114642 / LMG 32736 / 3841) (Rhizobium leguminosarum bv. viciae).